The primary structure comprises 339 residues: Dihydroorotate dehydrogenase (quinone) (339 aa).

FMN is bound by residues 62–66 (AGMDK) and threonine 86. Lysine 66 serves as a coordination point for substrate. A substrate-binding site is contributed by 111–115 (NRMGF). Residues asparagine 139 and asparagine 172 each coordinate FMN. Asparagine 172 is a binding site for substrate. Residue serine 175 is the Nucleophile of the active site. Asparagine 177 contacts substrate. Positions 217 and 245 each coordinate FMN. Residue 246–247 (NT) coordinates substrate. FMN-binding positions include glycine 268, glycine 297, and 318-319 (YS).

The protein belongs to the dihydroorotate dehydrogenase family. Type 2 subfamily. Monomer. It depends on FMN as a cofactor.

It localises to the cell membrane. The catalysed reaction is (S)-dihydroorotate + a quinone = orotate + a quinol. Its pathway is pyrimidine metabolism; UMP biosynthesis via de novo pathway; orotate from (S)-dihydroorotate (quinone route): step 1/1. Its function is as follows. Catalyzes the conversion of dihydroorotate to orotate with quinone as electron acceptor. The sequence is that of Dihydroorotate dehydrogenase (quinone) from Shewanella baltica (strain OS223).